A 76-amino-acid polypeptide reads, in one-letter code: UPF0154 protein Sca_0984 (76 aa).

Residues 4-24 (WLAILLIVAALIIGLVGGFFL) form a helical membrane-spanning segment.

Belongs to the UPF0154 family.

It is found in the cell membrane. This chain is UPF0154 protein Sca_0984, found in Staphylococcus carnosus (strain TM300).